The primary structure comprises 642 residues: Threonine--tRNA ligase (642 aa).

In terms of domain architecture, TGS spans 1 to 63 (MSTVTVTLPD…TADVELEIVT (63 aa)). Residues 242–533 (DHRKIGQEMD…LTEHYNGKFP (292 aa)) form a catalytic region. 3 residues coordinate Zn(2+): C334, H385, and H510.

It belongs to the class-II aminoacyl-tRNA synthetase family. Homodimer. Requires Zn(2+) as cofactor.

It localises to the cytoplasm. The enzyme catalyses tRNA(Thr) + L-threonine + ATP = L-threonyl-tRNA(Thr) + AMP + diphosphate + H(+). In terms of biological role, catalyzes the attachment of threonine to tRNA(Thr) in a two-step reaction: L-threonine is first activated by ATP to form Thr-AMP and then transferred to the acceptor end of tRNA(Thr). This chain is Threonine--tRNA ligase, found in Haloarcula marismortui (strain ATCC 43049 / DSM 3752 / JCM 8966 / VKM B-1809) (Halobacterium marismortui).